Reading from the N-terminus, the 290-residue chain is Glycine--tRNA ligase alpha subunit (290 aa).

The protein belongs to the class-II aminoacyl-tRNA synthetase family. In terms of assembly, tetramer of two alpha and two beta subunits.

The protein resides in the cytoplasm. It catalyses the reaction tRNA(Gly) + glycine + ATP = glycyl-tRNA(Gly) + AMP + diphosphate. This Brachyspira hyodysenteriae (strain ATCC 49526 / WA1) protein is Glycine--tRNA ligase alpha subunit.